A 142-amino-acid polypeptide reads, in one-letter code: MKKEELKKKLSPLAYRVTQENGTEARFTNEFDDFFEKGLYVDIVSGEPLFTSLDKYQSGCGWPAFTQPIDKKVVKEKRDKSLFMERTEVRSSNADSHLGHVFTDGPLDKGGLRYCINSAALRFIPFDQLESEGYGDYIKYFS.

The region spanning K3–F126 is the MsrB domain. C115 functions as the Nucleophile in the catalytic mechanism.

The protein belongs to the MsrB Met sulfoxide reductase family.

The enzyme catalyses L-methionyl-[protein] + [thioredoxin]-disulfide + H2O = L-methionyl-(R)-S-oxide-[protein] + [thioredoxin]-dithiol. This chain is Peptide methionine sulfoxide reductase MsrB, found in Lactococcus lactis subsp. cremoris (strain MG1363).